A 434-amino-acid polypeptide reads, in one-letter code: tRNA modification GTPase MnmE (434 aa).

Residues R20, E79, and V119 each coordinate (6S)-5-formyl-5,6,7,8-tetrahydrofolate. The 143-residue stretch at 219 to 361 (GLRVVLAGRP…LQEKLVEIGK (143 aa)) folds into the TrmE-type G domain. GTP-binding positions include 229–234 (NAGKST), 248–254 (APIAGTT), and 273–276 (DTAG). Residues S233 and T254 each contribute to the Mg(2+) site. K434 contributes to the (6S)-5-formyl-5,6,7,8-tetrahydrofolate binding site.

This sequence belongs to the TRAFAC class TrmE-Era-EngA-EngB-Septin-like GTPase superfamily. TrmE GTPase family. As to quaternary structure, homodimer. Heterotetramer of two MnmE and two MnmG subunits. K(+) serves as cofactor.

It localises to the cytoplasm. Functionally, exhibits a very high intrinsic GTPase hydrolysis rate. Involved in the addition of a carboxymethylaminomethyl (cmnm) group at the wobble position (U34) of certain tRNAs, forming tRNA-cmnm(5)s(2)U34. In Zymomonas mobilis subsp. mobilis (strain ATCC 31821 / ZM4 / CP4), this protein is tRNA modification GTPase MnmE.